Here is a 300-residue protein sequence, read N- to C-terminus: tRNA dimethylallyltransferase (300 aa).

9 to 16 contacts ATP; that stretch reads GTTASGKS. 11 to 16 provides a ligand contact to substrate; it reads TASGKS. The tract at residues 34–37 is interaction with substrate tRNA; it reads DSLC.

The protein belongs to the IPP transferase family. As to quaternary structure, monomer. Mg(2+) is required as a cofactor.

The enzyme catalyses adenosine(37) in tRNA + dimethylallyl diphosphate = N(6)-dimethylallyladenosine(37) in tRNA + diphosphate. Catalyzes the transfer of a dimethylallyl group onto the adenine at position 37 in tRNAs that read codons beginning with uridine, leading to the formation of N6-(dimethylallyl)adenosine (i(6)A). This Campylobacter fetus subsp. fetus (strain 82-40) protein is tRNA dimethylallyltransferase.